We begin with the raw amino-acid sequence, 333 residues long: MIDTTLPLTDIHRHLDGNIRPQTILELGRQYNISLPAQSLETLIPHVQVIANEPDLVSFLTKLDWGVKVLASLDACRRVAFENIEDAARNGLHYVELRFSPGYMAMAHQLPVAGVVEAVIDGVREGCRTFGVQAKLIGIMSRTFGEAACQQELEAFLAHRDQITALDLAGDELGFPGSLFLSHFNRARDAGWHITVHAGEAAGPESIWQAIRELGAERIGHGVKAIEDRALMDFLAEQQIGIESCLTSNIQTSTVADLAAHPLKTFLEHGIRASINTDDPGVQGVDIIHEYTVAAPAAGLSREQIRQAQINGLEMAFLSAEEKRALREKVAAK.

H12 and H14 together coordinate Zn(2+). Residues H14, D16, and G170 each coordinate substrate. H197 serves as a coordination point for Zn(2+). E200 functions as the Proton donor in the catalytic mechanism. Zn(2+) is bound at residue D278. D279 lines the substrate pocket.

The protein belongs to the metallo-dependent hydrolases superfamily. Adenosine and AMP deaminases family. Adenosine deaminase subfamily. It depends on Zn(2+) as a cofactor.

The catalysed reaction is adenosine + H2O + H(+) = inosine + NH4(+). It carries out the reaction 2'-deoxyadenosine + H2O + H(+) = 2'-deoxyinosine + NH4(+). Catalyzes the hydrolytic deamination of adenosine and 2-deoxyadenosine. This is Adenosine deaminase from Escherichia coli O45:K1 (strain S88 / ExPEC).